Here is a 413-residue protein sequence, read N- to C-terminus: Palmitoyltransferase ZDHHC6 (413 aa).

The Cytoplasmic portion of the chain corresponds to 1–24; it reads MGTFCSVVKFENLQELKRLCHWGP. A helical transmembrane segment spans residues 25–45; sequence IIALGVIAICSAMAMIDSVLW. At 46–57 the chain is on the lumenal side; that stretch reads YWPLHTTGGSVN. Residues 58–78 form a helical membrane-spanning segment; it reads FIMLINWTVMILYNYFNAMFV. Topologically, residues 79-143 are cytoplasmic; that stretch reads GPGFVPLGWK…NCCGYQNHAS (65 aa). The 51-residue stretch at 99–149 folds into the DHHC domain; that stretch reads QYCKVCQAYKAPRSHHCRKCNRCVMKMDHHCPWINNCCGYQNHASFTLFLL. Residue cysteine 129 is the S-palmitoyl cysteine intermediate of the active site. Residues 144-164 traverse the membrane as a helical segment; that stretch reads FTLFLLLAPLGCIHAAFIFVM. Over 165–194 the chain is Lumenal; that stretch reads TMYTQLYNRLSFGWNTVKIDMSAARRDPLP. A helical membrane pass occupies residues 195-215; that stretch reads IIPFGLAAFAATLFALGLALG. At 216 to 413 the chain is on the cytoplasmic side; that stretch reads TTIAVGMLFF…QAPEGEKKNR (198 aa). Positions 313 to 398 constitute an SH3 domain; it reads VRSVRYKVIE…PRNCVEKCPC (86 aa). Residues cysteine 328, cysteine 329, and cysteine 343 are each lipidated (S-palmitoyl cysteine). The Di-lysine motif motif lies at 410–413; that stretch reads KKNR.

This sequence belongs to the DHHC palmitoyltransferase family. As to quaternary structure, homooligomerizes. Interacts with SELENOK. Palmitoylated at 3 different sites by ZDHHC16. The combination of the different palmitoylation events strongly affects the quaternary assembly of ZDHHC6, its localization, stability and function. Palmitoylation at Cys-328 accelerates the turnover of ZDHHC6. Depalmitoylated by LYPLA2.

Its subcellular location is the endoplasmic reticulum membrane. The catalysed reaction is L-cysteinyl-[protein] + hexadecanoyl-CoA = S-hexadecanoyl-L-cysteinyl-[protein] + CoA. The enzyme catalyses L-cysteinyl-[protein] + octadecanoyl-CoA = S-octadecanoyl-L-cysteinyl-[protein] + CoA. In terms of biological role, endoplasmic reticulum palmitoyl acyltransferase that mediates palmitoylation of proteins such as AMFR, CALX, ITPR1 and TFRC. Palmitoylates calnexin (CALX), which is required for its association with the ribosome-translocon complex and efficient folding of glycosylated proteins. Mediates palmitoylation of AMFR, promoting AMFR distribution to the peripheral endoplasmic reticulum. Together with SELENOK, palmitoylates ITPR1 in immune cells, leading to regulate ITPR1 stability and function. Stearoyltransferase that mediates stearoylation of TFRC to inhibit TFRC-mediated activation of the JNK pathway and mitochondrial fragmentation. In Bos taurus (Bovine), this protein is Palmitoyltransferase ZDHHC6.